Consider the following 1529-residue polypeptide: Myosin-11 (1529 aa).

Residues 11–60 form the Myosin N-terminal SH3-like domain; sequence IVGSHVWIEDSDVAWIDGLVEKINGQDVEVQATNGKKITAKLSKIYPKDM. The Myosin motor domain occupies 65-735; it reads GGVDDMTKLS…QMAELDARRT (671 aa). Residues 159–166 and 212–220 contribute to the ATP site; these read GESGAGKT and NNNSSRFGK. Actin-binding regions lie at residues 498-532, 534-557, 592-616, and 616-638; these read LIEK…YQTF, THKR…AGEV, FPPL…KLQL, and LQQL…KPNN. 6 consecutive IQ domains span residues 738-767, 761-790, 786-815, 809-838, 834-863, and 857-886; these read LSAA…ATIS, LRKA…QAAA, RQAA…AALV, LHVA…TKAA, QTKA…GVIL, and LKKG…ASRE. The stretch at 887–1059 forms a coiled coil; the sequence is TGALKEAKDM…VLRQQAVSIA (173 aa). Residues 993 to 1027 are compositionally biased toward basic and acidic residues; it reads EQEKQRADDATRKFDEAQESSEDRKKKLEDTEKKA. Disordered regions lie at residues 993 to 1031 and 1096 to 1115; these read EQEK…QQLQ and INRR…LNEK. The region spanning 1163 to 1472 is the Dilute domain; that stretch reads DRIIQTIGQA…IANMRVLMTE (310 aa).

This sequence belongs to the TRAFAC class myosin-kinesin ATPase superfamily. Myosin family. Plant myosin class XI subfamily. As to quaternary structure, homodimer.

It localises to the cytoplasm. In terms of biological role, myosin heavy chain that is required for the cell cycle-regulated transport of various organelles and proteins for their segregation. Functions by binding with its tail domain to receptor proteins on organelles and exerting force with its N-terminal motor domain against actin filaments, thereby transporting its cargo along polarized actin cables. Involved in trafficking of Golgi stacks, mitochondria and peroxisomes. The chain is Myosin-11 (XI-E) from Arabidopsis thaliana (Mouse-ear cress).